Consider the following 2131-residue polypeptide: MKGHQFKSWIFELREILREIKNSHYFLDSWTQFNSVGSFIHIFFYQERFLKLFDPRIWSILLSPNSQGSTSNRYFTIKGVVLFVVVVLIYRITNRNMVERKNLYLIGLFPIPMNSIGPRNDTLEKSFGSSNINRLIVSLLYLPKGKKISESYFLDPKESTWFLPITKKCIMPESNRGSRWWRNWIGKRRDSSCKISNETVAGIEISFKEKDIQYLEFPFVYYMDDPIRKDHDWELFDCLSLFLRNVSRENWIWLDNVRLVNKDRFFSKVRNVSSNIQYDFTRSSFVQVTDSSQLKESSDQSRDRSNSISNADSEYHTLINKREIQQLKERSILRDPSFLQTEGTEIESDRFPKCLSGYSSMPRLFTAREKQMIIHLLPEEIEQLLENPTRSIRSFFSGRWSELHLGSNPTERSTRDPQLLKKQQDVSFAPSRQSENKEMVNIFKIIKYLQNTVSIHPISSDPGCDMVPKDELDMDSSDKISFLNKNSFFDLFHLFHDRNRGGYALHHDFESEEKFQEMADLFTLSITDPDLVYHRGFSFSIDSCGLDQKQFLNEVFNSRDESKKKSLLVLSPIFYEENESFYRRIRKKGVRISRNVLNRFFLINRSDRSFEYGIQRDQIGNDTLNHRTIRKYMINQDFSNLKKSQKKWFDPLIFLSRTERFMNRDPDAYRYKWFNGSKNFQEHLEHFVSEQKSRFQVVFDQLRINQYSIDWSEVIDKKDLSKSLRFFLSKSLRFFLSKLLLFLSNSLPFFFVSFGNIPINRSEIRIYELKGPNDQLYNPLVESIGLQIVHLKKWKAFLLDDHDTFQKSKFLINGGTISPFLFNKIPKWMIDSFHTRNNSGKSFDNTDSYFSMISHDQNNWLNPVKPFHRSSLISSFYKANQLRFLNNPHHFCFYCNKRFPFYMEKARINNSDFTYRQFLNILFIHNKLFSLCVGKKKHAFLERDTISPIESQVSNIFLPNDFPIRSDLLVRRTIYSIADISGTPLTEGQLVHFERTYCQPLSDMNLSDSEKKNLHQYLNFNSNMGFIYTPCSEKYLLSEKRKKRSLCLKKCVEKGQMYRTFQRDSAFSTLSKWNLFQTYMPWFLTSTGYKYLNFLFLDTFSDLLPILSSSQKFLSILHDIMHGSGISWRILQKKLCLPPWNLISEISSKCLHNLLLPEEMIHRNNESPLIWTHLASPNVREFFYSILFLLFVAGYLVRTHLLFVFRASSELQTEFERVKSLMIPSYMIELRKLLDRYPTSEPNSFWLKNLFLVALEQLGDSLEEIRGSASGDNMLLGGGPGPAYGFKSIRSKKKYLNINLIDILDLISIIPNPINRITFSRNTRHLSHTSKEIYSLIRKRKRVNGDWIDDKIESWVASSDSIDDEEREFLVQFSTLTTEKRIDQILLSLTHSDHLSKNDSGYQLIEQPGAIYLRYLVDIHKKYLMNYEFNTSCLAERRVFLAHYQTITYSQTSCGANSFHFPSHGKPFSLRLALSPSRGILVIGSIGTGRSYLVKYLATNSYVPFITVFLNKFLDNKPKGSLIDASDDIDRDLDTELELLTMMNALTMDMMPEIDQFSITLQFELAKAMSPCIIWIPNIHDLDVNESNYLSLGLFVNYLSRDCERGSTRNILVIASTHIPQKVDPALIAPNQLNTCIKIRRLRIPQQRKHFFTLSYTRGFHLEKKMFHTNGFGSITMGSNVRDLVAFINEALSISITQKKSIIDTNTIRSALHRQTWDLRSQVRSVQDHGILFYQIGRAVAQNVLLSNCPIDPISTYMKKKSCNEGDSYLYKWYFELGTSMKKLTILLYLLSCSAGSVAQDLWSLPGPDEKNGITSYGLVENDSYLVHGLLEVEGALVGSSRIEKACSQNDRVTLFLRPELRNPLDMMQNGSCSILDHRFLYEKYESELEEGEGALDPQQIEEDLFNHIVWAPRIWNPWGFLFDCIERPNELGFPYWARSFRGKRSIYDKEDELQENDSEFLQSGTMQYQTRDRSSKEQGFFRISQFIWDPADPLFFLFKDQPFVSVFSHREFFADEEISKGLLTSQMNPPISIFQRWFIKNTQEKHFELLINRQRWLRTNSSLSNGSFRSNTLSESYQYLSNLFLSNGTLLDQMTKTLLRKRWLFPDEMKIGFMQEEKDFPFLSRKDMWP.

1484–1491 (GSIGTGRS) provides a ligand contact to ATP.

The protein belongs to the Ycf2 family.

The protein localises to the plastid. It is found in the chloroplast stroma. Functionally, probable ATPase of unknown function. Its presence in a non-photosynthetic plant (Epifagus virginiana) and experiments in tobacco indicate that it has an essential function which is probably not related to photosynthesis. This chain is Protein Ycf2 (ycf2-A), found in Spinacia oleracea (Spinach).